Consider the following 419-residue polypeptide: Adenylosuccinate synthetase (419 aa).

GTP contacts are provided by residues 15 to 21 (GDEGKGK) and 43 to 45 (GHT). Residue Asp-16 is the Proton acceptor of the active site. Residues Asp-16 and Gly-43 each coordinate Mg(2+). Residues 16-19 (DEGK), 41-44 (NAGH), Thr-128, Arg-142, Gln-223, Thr-238, and Arg-302 each bind IMP. His-44 serves as the catalytic Proton donor. Residue 298–304 (TTTGRAR) coordinates substrate. GTP contacts are provided by residues Arg-304, 330–332 (KLD), and 408–410 (STS).

This sequence belongs to the adenylosuccinate synthetase family. As to quaternary structure, homodimer. The cofactor is Mg(2+).

The protein localises to the cytoplasm. The catalysed reaction is IMP + L-aspartate + GTP = N(6)-(1,2-dicarboxyethyl)-AMP + GDP + phosphate + 2 H(+). The protein operates within purine metabolism; AMP biosynthesis via de novo pathway; AMP from IMP: step 1/2. In terms of biological role, plays an important role in the de novo pathway of purine nucleotide biosynthesis. Catalyzes the first committed step in the biosynthesis of AMP from IMP. In Sulfurimonas denitrificans (strain ATCC 33889 / DSM 1251) (Thiomicrospira denitrificans (strain ATCC 33889 / DSM 1251)), this protein is Adenylosuccinate synthetase.